Consider the following 242-residue polypeptide: Ras-like protein family member 11A (242 aa).

Positions 17–241 (ESSSDYLLPK…SSKAKAASTL (225 aa)) are small GTPase-like. GTP-binding positions include 34–41 (GASCVGKS), 81–85 (DTPGG), and 147–150 (NKGD).

This sequence belongs to the small GTPase superfamily. Ras family. As to quaternary structure, interacts with UBF/UBTF.

Its subcellular location is the nucleus. The protein localises to the nucleolus. The catalysed reaction is GTP + H2O = GDP + phosphate + H(+). Regulator of rDNA transcription. Acts in cooperation UBF/UBTF and positively regulates RNA polymerase I transcription. The sequence is that of Ras-like protein family member 11A from Rattus norvegicus (Rat).